We begin with the raw amino-acid sequence, 589 residues long: NADP-dependent malic enzyme (589 aa).

Tyr-137 (proton donor) is an active-site residue. Residue Arg-190 coordinates NAD(+). Lys-208 functions as the Proton acceptor in the catalytic mechanism. A divalent metal cation is bound by residues Glu-280, Asp-281, and Asp-304. An NAD(+)-binding site is contributed by Asp-304. 333-349 (LFLGAGEAGTGIAELIA) contacts NADP(+). Asn-445 lines the NAD(+) pocket.

The protein belongs to the malic enzymes family. As to quaternary structure, homotetramer. It depends on Mg(2+) as a cofactor. The cofactor is Mn(2+).

The protein resides in the cytoplasm. The catalysed reaction is (S)-malate + NADP(+) = pyruvate + CO2 + NADPH. It catalyses the reaction oxaloacetate + H(+) = pyruvate + CO2. The sequence is that of NADP-dependent malic enzyme (ME1) from Phaseolus vulgaris (Kidney bean).